The chain runs to 108 residues: MSTVYETLYILRPDLTDEQVELAIAKYQNLLQEQGATDIEVQNRGKRRLAYEIKKQRDGFYVQFNYNAPGKAIAILERAMRLSEEVIRYLTVKQEVTKEKEDKVAVTA.

It belongs to the bacterial ribosomal protein bS6 family.

Binds together with bS18 to 16S ribosomal RNA. This Trichormus variabilis (strain ATCC 29413 / PCC 7937) (Anabaena variabilis) protein is Small ribosomal subunit protein bS6.